The following is a 554-amino-acid chain: Probable efflux pump gsfJ (554 aa).

14 consecutive transmembrane segments (helical) span residues leucine 54–isoleucine 74, serine 93–tyrosine 115, isoleucine 120–valine 140, alanine 152–alanine 172, leucine 181–glycine 201, lysine 206–phenylalanine 226, leucine 248–glycine 268, valine 279–tyrosine 299, isoleucine 321–phenylalanine 341, proline 349–valine 369, isoleucine 379–tyrosine 399, tryptophan 410–serine 430, isoleucine 447–phenylalanine 467, and valine 518–tryptophan 538.

Belongs to the major facilitator superfamily.

It is found in the membrane. Probable efflux pump; part of the gene cluster that mediates the biosynthesis of griseofulvin. This Penicillium aethiopicum protein is Probable efflux pump gsfJ.